The sequence spans 254 residues: Small ribosomal subunit protein uS2 (254 aa).

It belongs to the universal ribosomal protein uS2 family.

The sequence is that of Small ribosomal subunit protein uS2 from Borrelia duttonii (strain Ly).